We begin with the raw amino-acid sequence, 266 residues long: Short-chain dehydrogenase/reductase tropE (266 aa).

3 residues coordinate NADP(+): Leu18, Asp69, and Asn96. The active-site Proton donor is Ser147. Residues Tyr181, Lys185, and Thr216 each coordinate NADP(+). The active-site Proton acceptor is Tyr181. Lys185 functions as the Lowers pKa of active site Tyr in the catalytic mechanism.

This sequence belongs to the short-chain dehydrogenases/reductases (SDR) family.

Its pathway is secondary metabolite biosynthesis. In terms of biological role, short-chain dehydrogenase/reductase; part of the gene cluster that mediates the biosynthesis of the tropolone class of fungal maleic anhydrides. The pathway begins with the synthesis of 3-methylorcinaldehyde by the non-reducing polyketide synthase (PKS) tropA. 3-methylorcinaldehyde is the substrate for the FAD-dependent monooxygenase tropB to yield a dearomatized hydroxycyclohexadione. The 2-oxoglutarate-dependent dioxygenase tropC then performs the oxidative ring expansion to provide the first tropolone metabolite stipitaldehyde. Trop D converts stipitaldehyde into stipitacetal which is in turn converted to stipitalide by the short-chain dehydrogenase/reductase tropE. The next steps involve tropF, tropG, tropH, tropI and tropJ to form successive tropolone maleic anhydrides including stipitaldehydic, stipitatonic and stipitatic acids. In Talaromyces stipitatus (strain ATCC 10500 / CBS 375.48 / QM 6759 / NRRL 1006) (Penicillium stipitatum), this protein is Short-chain dehydrogenase/reductase tropE.